Here is a 483-residue protein sequence, read N- to C-terminus: Glutamyl-tRNA(Gln) amidotransferase subunit A (483 aa).

Active-site charge relay system residues include Lys77 and Ser152. Ser176 functions as the Acyl-ester intermediate in the catalytic mechanism.

This sequence belongs to the amidase family. GatA subfamily. In terms of assembly, heterotrimer of A, B and C subunits.

It carries out the reaction L-glutamyl-tRNA(Gln) + L-glutamine + ATP + H2O = L-glutaminyl-tRNA(Gln) + L-glutamate + ADP + phosphate + H(+). Functionally, allows the formation of correctly charged Gln-tRNA(Gln) through the transamidation of misacylated Glu-tRNA(Gln) in organisms which lack glutaminyl-tRNA synthetase. The reaction takes place in the presence of glutamine and ATP through an activated gamma-phospho-Glu-tRNA(Gln). In Shouchella clausii (strain KSM-K16) (Alkalihalobacillus clausii), this protein is Glutamyl-tRNA(Gln) amidotransferase subunit A.